Reading from the N-terminus, the 424-residue chain is Elongation factor 1-alpha (424 aa).

The tr-type G domain maps to lysine 5–valine 223. Positions glycine 14–serine 21 are G1. Residue glycine 14 to serine 21 coordinates GTP. Serine 21 serves as a coordination point for Mg(2+). Positions glycine 70–aspartate 74 are G2. The interval aspartate 91–glycine 94 is G3. Residues aspartate 91 to histidine 95 and asparagine 146 to aspartate 149 each bind GTP. Residues asparagine 146 to aspartate 149 are G4. Positions serine 187 to tyrosine 189 are G5.

The protein belongs to the TRAFAC class translation factor GTPase superfamily. Classic translation factor GTPase family. EF-Tu/EF-1A subfamily.

It is found in the cytoplasm. The enzyme catalyses GTP + H2O = GDP + phosphate + H(+). GTP hydrolase that promotes the GTP-dependent binding of aminoacyl-tRNA to the A-site of ribosomes during protein biosynthesis. The protein is Elongation factor 1-alpha of Methanothrix thermoacetophila (strain DSM 6194 / JCM 14653 / NBRC 101360 / PT) (Methanosaeta thermophila).